The chain runs to 353 residues: JmjC domain-containing protein E (353 aa).

The JmjC domain maps to 138-348 (YYIQYQNNSL…ETTKYQKQIK (211 aa)).

The protein is JmjC domain-containing protein E (jcdE) of Dictyostelium discoideum (Social amoeba).